Here is a 304-residue protein sequence, read N- to C-terminus: ATP phosphoribosyltransferase (304 aa).

The protein belongs to the ATP phosphoribosyltransferase family.

It is found in the cytoplasm. It carries out the reaction 1-(5-phospho-beta-D-ribosyl)-ATP + diphosphate = 5-phospho-alpha-D-ribose 1-diphosphate + ATP. It participates in amino-acid biosynthesis; L-histidine biosynthesis; L-histidine from 5-phospho-alpha-D-ribose 1-diphosphate: step 1/9. Catalyzes the condensation of ATP and 5-phosphoribose 1-diphosphate to form N'-(5'-phosphoribosyl)-ATP (PR-ATP). Has a crucial role in the pathway because the rate of histidine biosynthesis seems to be controlled primarily by regulation of the enzymatic activity. The protein is ATP phosphoribosyltransferase (HIS1) of Debaryomyces hansenii (strain ATCC 36239 / CBS 767 / BCRC 21394 / JCM 1990 / NBRC 0083 / IGC 2968) (Yeast).